The sequence spans 201 residues: MELVLKDAQSALEVSETTFGRDFNEALVHQVVVAYAANARQGTRAQKTRAEVVGSGKKPWRQKGTGRARAGTVKGPIWRGGGVTFAAKAQDHSQKVNKKMYRGALKSIFSELVRQDRLVVVESFGVEAPKTKELKAKLNEMQLEDVLIVTPEVDENLFLAARNLYKVDVRDVAGIDPVSLIAFNKVLVTAEAIKQIEEMLG.

The interval 46–71 is disordered; sequence QKTRAEVVGSGKKPWRQKGTGRARAG.

The protein belongs to the universal ribosomal protein uL4 family. Part of the 50S ribosomal subunit.

Its function is as follows. One of the primary rRNA binding proteins, this protein initially binds near the 5'-end of the 23S rRNA. It is important during the early stages of 50S assembly. It makes multiple contacts with different domains of the 23S rRNA in the assembled 50S subunit and ribosome. In terms of biological role, forms part of the polypeptide exit tunnel. This Shewanella piezotolerans (strain WP3 / JCM 13877) protein is Large ribosomal subunit protein uL4.